Consider the following 513-residue polypeptide: ATP synthase subunit alpha (513 aa).

Position 169 to 176 (169 to 176 (GDRQTGKT)) interacts with ATP.

This sequence belongs to the ATPase alpha/beta chains family. As to quaternary structure, F-type ATPases have 2 components, CF(1) - the catalytic core - and CF(0) - the membrane proton channel. CF(1) has five subunits: alpha(3), beta(3), gamma(1), delta(1), epsilon(1). CF(0) has three main subunits: a(1), b(2) and c(9-12). The alpha and beta chains form an alternating ring which encloses part of the gamma chain. CF(1) is attached to CF(0) by a central stalk formed by the gamma and epsilon chains, while a peripheral stalk is formed by the delta and b chains.

It is found in the cell inner membrane. The catalysed reaction is ATP + H2O + 4 H(+)(in) = ADP + phosphate + 5 H(+)(out). Its function is as follows. Produces ATP from ADP in the presence of a proton gradient across the membrane. The alpha chain is a regulatory subunit. This is ATP synthase subunit alpha from Shewanella amazonensis (strain ATCC BAA-1098 / SB2B).